A 352-amino-acid chain; its full sequence is Coproporphyrin III ferrochelatase (352 aa).

Positions 52 and 121 each coordinate Fe-coproporphyrin III. Fe(2+)-binding residues include His181 and Glu269.

Belongs to the ferrochelatase family.

The protein localises to the cytoplasm. It carries out the reaction Fe-coproporphyrin III + 2 H(+) = coproporphyrin III + Fe(2+). It participates in porphyrin-containing compound metabolism; protoheme biosynthesis. Its function is as follows. Involved in coproporphyrin-dependent heme b biosynthesis. Catalyzes the insertion of ferrous iron into coproporphyrin III to form Fe-coproporphyrin III. This Nocardia farcinica (strain IFM 10152) protein is Coproporphyrin III ferrochelatase.